We begin with the raw amino-acid sequence, 233 residues long: PEP2-like protein NECHADRAFT_97050 (233 aa).

Belongs to the PEP2 family.

In terms of biological role, may contribute to the ability of the fungus to cause disease on pea plants. The chain is PEP2-like protein NECHADRAFT_97050 from Fusarium vanettenii (strain ATCC MYA-4622 / CBS 123669 / FGSC 9596 / NRRL 45880 / 77-13-4) (Fusarium solani subsp. pisi).